Reading from the N-terminus, the 347-residue chain is MDENKQKALAAALGQIEKQFGKGSIMRLGDNRAMDVETISTGSLSLDIALGAGGLPMGRIVEIYGPESSGKTTLTLELIAAAQREGKTCAFIDAEHALDPVYAKKLGVDIDALLVSQPDTGEQALEICDALARSGAIDVMVVDSVAALTPKAEIEGEMGDSHMGLQARMLSQAMRKLTGNLKQSNCMCIFINQIRMKIGVMFGNPETTTGGNALKFYASVRLDIRRTGAIKEGDEVVGNETRIKVVKNKIAAPFKEANTQIMYGQGFNREGELIDLGVKHKLVEKAGAWYSYNGDKIGQGKANACNYLREHPEIAKTIDTKLREMLLSPAQPEAPAAGEKPEQEEEF.

ATP is bound at residue 65–72; that stretch reads GPESSGKT. The interval 328–347 is disordered; sequence SPAQPEAPAAGEKPEQEEEF.

This sequence belongs to the RecA family.

The protein localises to the cytoplasm. In terms of biological role, can catalyze the hydrolysis of ATP in the presence of single-stranded DNA, the ATP-dependent uptake of single-stranded DNA by duplex DNA, and the ATP-dependent hybridization of homologous single-stranded DNAs. It interacts with LexA causing its activation and leading to its autocatalytic cleavage. This is Protein RecA from Vibrio parahaemolyticus serotype O3:K6 (strain RIMD 2210633).